Reading from the N-terminus, the 432-residue chain is Adenylosuccinate synthetase (432 aa).

GTP-binding positions include 13–19 (GDEGKGK) and 41–43 (GHT). D14 acts as the Proton acceptor in catalysis. 2 residues coordinate Mg(2+): D14 and G41. IMP is bound by residues 14–17 (DEGK), 39–42 (NAGH), T130, R144, Q225, T240, and R304. H42 (proton donor) is an active-site residue. Position 300-306 (300-306 (ATTGRRR)) interacts with substrate. Residues R306, 332–334 (KLD), and 415–417 (STG) contribute to the GTP site.

The protein belongs to the adenylosuccinate synthetase family. As to quaternary structure, homodimer. It depends on Mg(2+) as a cofactor.

The protein localises to the cytoplasm. It catalyses the reaction IMP + L-aspartate + GTP = N(6)-(1,2-dicarboxyethyl)-AMP + GDP + phosphate + 2 H(+). Its pathway is purine metabolism; AMP biosynthesis via de novo pathway; AMP from IMP: step 1/2. Functionally, plays an important role in the de novo pathway of purine nucleotide biosynthesis. Catalyzes the first committed step in the biosynthesis of AMP from IMP. The sequence is that of Adenylosuccinate synthetase from Enterobacter sp. (strain 638).